The following is a 339-amino-acid chain: Casein kinase II subunit alpha' (339 aa).

One can recognise a Protein kinase domain in the interval 50–334 (YEIINKIGRG…AKEAMDHKFF (285 aa)). ATP contacts are provided by residues 56–64 (IGRGKYSEV) and Lys79. The Proton acceptor role is filled by Asp167.

This sequence belongs to the protein kinase superfamily. Ser/Thr protein kinase family. CK2 subfamily. As to quaternary structure, tetramer composed of an alpha chain, an alpha', one beta chain and one beta' chain. Interacts with FACT subunits POB3 and SPT16. Interacts with NAP1. Interacts with YTA7.

The enzyme catalyses L-seryl-[protein] + ATP = O-phospho-L-seryl-[protein] + ADP + H(+). It carries out the reaction L-threonyl-[protein] + ATP = O-phospho-L-threonyl-[protein] + ADP + H(+). Its function is as follows. Catalytic subunit of a constitutively active serine/threonine-protein kinase complex that phosphorylates a large number of substrates containing acidic residues C-terminal to the phosphorylated serine or threonine. Phosphorylates YTA7 during S-phase to promote transcription of histones. The chain is Casein kinase II subunit alpha' from Saccharomyces cerevisiae (strain ATCC 204508 / S288c) (Baker's yeast).